Reading from the N-terminus, the 381-residue chain is MNDAVNPTAAKTVTGWPVSEAAAGAILTIDLGAIRENYRRLKALLGGVHCAGVVKANGYGLGAAKVAAALTREGCDIFFVALLAEGIALRKAVGTGPDIYVLNGLPPGSEPEAVAAGLCAVINSGAQLKAWRAAVHDAGRRLPAAIQVDSGMSRLGMAPAEVEALAGDSSAFDGIDIKYVMSHLACADEPRHPANEQQRLAFERLRAMLPRAPASLANSSGIFLGPSYHHDLARPGAALYGINPTPGEPNPMLPVVWLQAKVAQTRRIEKGAGIGYGHSYHADGPLSLATISFGYADGWLRRSASAAWFEGVRLPFLGRVSMDSIILDISALPPGRLREGDLVELLGPSQSVDDAAGHAGTIGYEILASLGPRFHRHYVGG.

Lys-55 serves as the catalytic Proton acceptor; specific for D-alanine. Lys-55 bears the N6-(pyridoxal phosphate)lysine mark. Arg-154 serves as a coordination point for substrate. Tyr-276 functions as the Proton acceptor; specific for L-alanine in the catalytic mechanism. Met-322 provides a ligand contact to substrate.

It belongs to the alanine racemase family. The cofactor is pyridoxal 5'-phosphate.

The catalysed reaction is L-alanine = D-alanine. Isomerizes L-alanine to D-alanine which is then oxidized to pyruvate by DadA. This is Alanine racemase, catabolic (dadB) from Mesorhizobium japonicum (strain LMG 29417 / CECT 9101 / MAFF 303099) (Mesorhizobium loti (strain MAFF 303099)).